Consider the following 123-residue polypeptide: Large ribosomal subunit protein uL29 (123 aa).

The segment at 84-123 (RPKKTRAMRRRLNKHEEGLKTKKQQRKERLYPPRKYAVKA) is disordered. The span at 86-96 (KKTRAMRRRLN) shows a compositional bias: basic residues.

The protein belongs to the universal ribosomal protein uL29 family. Component of the large ribosomal subunit.

Its subcellular location is the cytoplasm. Component of the large ribosomal subunit. The ribosome is a large ribonucleoprotein complex responsible for the synthesis of proteins in the cell. The protein is Large ribosomal subunit protein uL29 (RPL35) of Ophiophagus hannah (King cobra).